A 140-amino-acid chain; its full sequence is Iron sulfur cluster assembly protein 1 (140 aa).

The protein belongs to the NifU family. As to quaternary structure, component of the core Fe-S cluster (ISC) assembly machinery. [2Fe-2S] cluster is required as a cofactor.

The protein resides in the mitosome matrix. It functions in the pathway cofactor biosynthesis; iron-sulfur cluster biosynthesis. In terms of biological role, scaffold protein for the de novo synthesis of iron-sulfur (Fe-S) clusters within mitosomes, which is required for maturation of both [2Fe-2S] and [4Fe-4S] proteins. First, a [2Fe-2S] cluster is transiently assembled on the scaffold protein ISU1. In a second step, the cluster is released from ISU1, transferred to a glutaredoxin, followed by the formation of [2Fe-2S] proteins, the synthesis of [4Fe-4S] clusters and their target-specific insertion into the recipient apoproteins. Cluster assembly on ISU1 depends on the function of the cysteine desulfurase complex NFS1-ISD11, which serves as the sulfur donor for cluster synthesis, the iron-binding protein frataxin as the putative iron donor, and the electron transfer chain comprised of ferredoxin reductase and ferredoxin, which receive their electrons from NADH. The chain is Iron sulfur cluster assembly protein 1 (ISU1) from Encephalitozoon cuniculi (strain GB-M1) (Microsporidian parasite).